A 1409-amino-acid polypeptide reads, in one-letter code: DNA-directed RNA polymerase subunit beta' (1409 aa).

Zn(2+)-binding residues include C70, C72, C85, and C88. Positions 461, 463, and 465 each coordinate Mg(2+). 4 residues coordinate Zn(2+): C833, C907, C914, and C917. Residues 1389–1409 (EPVAQAAESEDVPDVSQQEAA) form a disordered region.

The protein belongs to the RNA polymerase beta' chain family. The RNAP catalytic core consists of 2 alpha, 1 beta, 1 beta' and 1 omega subunit. When a sigma factor is associated with the core the holoenzyme is formed, which can initiate transcription. The cofactor is Mg(2+). Requires Zn(2+) as cofactor.

The enzyme catalyses RNA(n) + a ribonucleoside 5'-triphosphate = RNA(n+1) + diphosphate. In terms of biological role, DNA-dependent RNA polymerase catalyzes the transcription of DNA into RNA using the four ribonucleoside triphosphates as substrates. The protein is DNA-directed RNA polymerase subunit beta' of Pelobacter propionicus (strain DSM 2379 / NBRC 103807 / OttBd1).